Consider the following 529-residue polypeptide: Glutamyl-tRNA reductase (529 aa).

47–50 is a binding site for substrate; sequence TCNR. Residue Cys48 is the Nucleophile of the active site. Residues 56–80 are disordered; that stretch reads SPRQQAPAPPRPGSAPPPSDEELSR. Over residues 62–73 the composition is skewed to pro residues; that stretch reads PAPPRPGSAPPP. Substrate contacts are provided by residues Ser125, 130–132, and Gln136; that span reads EPQ. 205–210 contributes to the NADP(+) binding site; it reads GAGDMA. Residues 454–505 form a disordered region; it reads RGAVDGPPTPRSARGAAPPASGARGGGSPRHADPRPQAAEDNGVYARQPGGR. A compositionally biased stretch (low complexity) spans 464–475; that stretch reads RSARGAAPPASG.

This sequence belongs to the glutamyl-tRNA reductase family. In terms of assembly, homodimer.

The catalysed reaction is (S)-4-amino-5-oxopentanoate + tRNA(Glu) + NADP(+) = L-glutamyl-tRNA(Glu) + NADPH + H(+). It participates in porphyrin-containing compound metabolism; protoporphyrin-IX biosynthesis; 5-aminolevulinate from L-glutamyl-tRNA(Glu): step 1/2. Catalyzes the NADPH-dependent reduction of glutamyl-tRNA(Glu) to glutamate 1-semialdehyde (GSA). The sequence is that of Glutamyl-tRNA reductase from Sorangium cellulosum (strain So ce56) (Polyangium cellulosum (strain So ce56)).